Consider the following 357-residue polypeptide: Homeobox protein HMX3 (357 aa).

Disordered regions lie at residues 1-58 (MPEP…LFAP) and 129-229 (LPRP…RKKK). The span at 16-27 (PQPPPPPPPAPK) shows a compositional bias: pro residues. 2 stretches are compositionally biased toward basic and acidic residues: residues 130–140 (PRPEASEKALL) and 149–173 (TDRD…KSPD). Ser153 and Ser180 each carry phosphoserine. Residues 191 to 209 (AAPGAAGASVGAAAATPGA) show a composition bias toward low complexity. Over residues 210–223 (EDWKKGAESPEKKP) the composition is skewed to basic and acidic residues. The homeobox DNA-binding region spans 227–286 (KKKTRTVFSRSQVFQLESTFDMKRYLSSSERAGLAASLHLTETQVKIWFQNRRNKWKRQL).

It belongs to the HMX homeobox family.

It is found in the nucleus. Transcription factor involved in specification of neuronal cell types and which is required for inner ear and hypothalamus development. Binds to the 5'-CAAGTG-3' core sequence. Controls semicircular canal formation in the inner ear. Also required for hypothalamic/pituitary axis of the CNS. The chain is Homeobox protein HMX3 (HMX3) from Homo sapiens (Human).